Reading from the N-terminus, the 244-residue chain is Putative membrane peptidase YdiL (244 aa).

Helical transmembrane passes span 7 to 27, 44 to 64, 80 to 100, 127 to 147, 159 to 179, and 202 to 222; these read FIIL…PLLF, AQGL…LLIL, IGLS…SQGI, AVPL…EIIF, TNFF…HADL, and IWVP…MQLE. Active-site proton donor/acceptor residues include E143 and H176.

It belongs to the peptidase U48 family.

It is found in the cell membrane. May function as endopeptidase which proteolytically removes the C-terminal three residues of farnesylated peptides containing the CAAX motif where C is cysteine, A is an aliphatic amino acid and X is any amino acid. In Bacillus subtilis (strain 168), this protein is Putative membrane peptidase YdiL (ydiL).